A 160-amino-acid chain; its full sequence is Crossover junction endodeoxyribonuclease RuvC (160 aa).

Residues aspartate 9, glutamate 68, and aspartate 141 contribute to the active site. Aspartate 9, glutamate 68, and aspartate 141 together coordinate Mg(2+).

Belongs to the RuvC family. In terms of assembly, homodimer which binds Holliday junction (HJ) DNA. The HJ becomes 2-fold symmetrical on binding to RuvC with unstacked arms; it has a different conformation from HJ DNA in complex with RuvA. In the full resolvosome a probable DNA-RuvA(4)-RuvB(12)-RuvC(2) complex forms which resolves the HJ. Mg(2+) is required as a cofactor.

The protein resides in the cytoplasm. It catalyses the reaction Endonucleolytic cleavage at a junction such as a reciprocal single-stranded crossover between two homologous DNA duplexes (Holliday junction).. Functionally, the RuvA-RuvB-RuvC complex processes Holliday junction (HJ) DNA during genetic recombination and DNA repair. Endonuclease that resolves HJ intermediates. Cleaves cruciform DNA by making single-stranded nicks across the HJ at symmetrical positions within the homologous arms, yielding a 5'-phosphate and a 3'-hydroxyl group; requires a central core of homology in the junction. The consensus cleavage sequence is 5'-(A/T)TT(C/G)-3'. Cleavage occurs on the 3'-side of the TT dinucleotide at the point of strand exchange. HJ branch migration catalyzed by RuvA-RuvB allows RuvC to scan DNA until it finds its consensus sequence, where it cleaves and resolves the cruciform DNA. The polypeptide is Crossover junction endodeoxyribonuclease RuvC (Campylobacter jejuni subsp. jejuni serotype O:23/36 (strain 81-176)).